The sequence spans 264 residues: Putative hydro-lyase Bpet2233 (264 aa).

Belongs to the D-glutamate cyclase family.

The polypeptide is Putative hydro-lyase Bpet2233 (Bordetella petrii (strain ATCC BAA-461 / DSM 12804 / CCUG 43448)).